The primary structure comprises 323 residues: Tyrosine--tRNA ligase (323 aa).

Tyrosine 36 provides a ligand contact to L-tyrosine. The 'HIGH' region signature appears at proline 41–histidine 49. Positions 158, 162, 165, and 180 each coordinate L-tyrosine. The short motif at lysine 214–serine 218 is the 'KMSKS' region element. Serine 217 contributes to the ATP binding site.

Belongs to the class-I aminoacyl-tRNA synthetase family. TyrS type 3 subfamily. As to quaternary structure, homodimer.

The protein resides in the cytoplasm. The catalysed reaction is tRNA(Tyr) + L-tyrosine + ATP = L-tyrosyl-tRNA(Tyr) + AMP + diphosphate + H(+). Its function is as follows. Catalyzes the attachment of tyrosine to tRNA(Tyr) in a two-step reaction: tyrosine is first activated by ATP to form Tyr-AMP and then transferred to the acceptor end of tRNA(Tyr). This is Tyrosine--tRNA ligase from Archaeoglobus fulgidus (strain ATCC 49558 / DSM 4304 / JCM 9628 / NBRC 100126 / VC-16).